A 324-amino-acid polypeptide reads, in one-letter code: tRNA pseudouridine synthase B (324 aa).

Aspartate 49 (nucleophile) is an active-site residue. The tract at residues 87 to 107 (RSTDDLEGQPTKTSDKRPSRE) is disordered.

The protein belongs to the pseudouridine synthase TruB family. Type 1 subfamily.

It catalyses the reaction uridine(55) in tRNA = pseudouridine(55) in tRNA. Responsible for synthesis of pseudouridine from uracil-55 in the psi GC loop of transfer RNAs. This Brucella abortus (strain 2308) protein is tRNA pseudouridine synthase B.